A 1196-amino-acid polypeptide reads, in one-letter code: Truncated transposon Ty1-A Gag-Pol polyprotein (1196 aa).

Residues 101 to 276 enclose the Integrase catalytic domain; it reads NSYEPFQYLH…AGLDISTLLP (176 aa). The Mg(2+) site is built by Asp-112 and Asp-177. 3 disordered regions span residues 397–528, 533–552, and 571–628; these read SKAV…ETEK, RSPSIDASPPENNSSHNIVP, and DLPL…DNET. The segment covering 401–410 has biased composition (low complexity); sequence SPTDSTPPST. Residues 446–456 are compositionally biased toward polar residues; the sequence is STPQISNIEST. Residues 479–494 are compositionally biased toward basic and acidic residues; the sequence is ESSHASKSKDFRHSDS. 2 stretches are compositionally biased toward polar residues: residues 495-523 and 542-552; these read YSENETNHTNVPISSTGGTNNKTVPQISD and PENNSSHNIVP. The short motif at 619-653 is the Bipartite nuclear localization signal element; it reads KKRSLEDNETEIKVSRDTWNTKNMRSLEPPRSKKR. Residues 779–917 enclose the Reverse transcriptase Ty1/copia-type domain; sequence NNYYITQLDI…DILGLEIKYQ (139 aa). The Mg(2+) site is built by Asp-787, Asp-868, Asp-869, Asp-1051, Glu-1093, and Asp-1126. One can recognise an RNase H Ty1/copia-type domain in the interval 1051–1193; the sequence is DASYGNQPYY…IKTFKLLTNK (143 aa).

Post-translationally, initially, virus-like particles (VLPs) are composed of the structural unprocessed proteins Gag and Gag-Pol, and also contain the host initiator methionine tRNA (tRNA(i)-Met) which serves as a primer for minus-strand DNA synthesis, and a dimer of genomic Ty RNA. Processing of the polyproteins occurs within the particle and proceeds by an ordered pathway, called maturation. First, the protease (PR) is released by autocatalytic cleavage of the Gag-Pol polyprotein yielding capsid protein p45 and a Pol-p154 precursor protein. This cleavage is a prerequisite for subsequent processing of Pol-p154 at the remaining sites to release the mature structural and catalytic proteins. Maturation takes place prior to the RT reaction and is required to produce transposition-competent VLPs.

The protein localises to the cytoplasm. It is found in the nucleus. It catalyses the reaction DNA(n) + a 2'-deoxyribonucleoside 5'-triphosphate = DNA(n+1) + diphosphate. The catalysed reaction is Endonucleolytic cleavage to 5'-phosphomonoester.. Its function is as follows. Reverse transcriptase/ribonuclease H (RT) is a multifunctional enzyme that catalyzes the conversion of the retro-elements RNA genome into dsDNA within the VLP. The enzyme displays a DNA polymerase activity that can copy either DNA or RNA templates, and a ribonuclease H (RNase H) activity that cleaves the RNA strand of RNA-DNA heteroduplexes during plus-strand synthesis and hydrolyzes RNA primers. The conversion leads to a linear dsDNA copy of the retrotransposon that includes long terminal repeats (LTRs) at both ends. Functionally, integrase (IN) targets the VLP to the nucleus, where a subparticle preintegration complex (PIC) containing at least integrase and the newly synthesized dsDNA copy of the retrotransposon must transit the nuclear membrane. Once in the nucleus, integrase performs the integration of the dsDNA into the host genome. This is Truncated transposon Ty1-A Gag-Pol polyprotein (TY1B-A) from Saccharomyces cerevisiae (strain ATCC 204508 / S288c) (Baker's yeast).